The following is a 383-amino-acid chain: Photosynthetic reaction center cytochrome c subunit (383 aa).

The first 22 residues, 1 to 22, serve as a signal peptide directing secretion; sequence MNLGKQLTLPAVAVVASVVLLG. A lipid anchor (N-palmitoyl cysteine) is attached at Cys23. The S-diacylglycerol cysteine moiety is linked to residue Cys23. The heme site is built by Met94, Cys107, Cys110, His111, Met130, His144, Cys152, Cys155, His156, Met236, Cys247, Cys250, His251, Cys307, Cys310, and His311. The segment at 335-383 is disordered; that stretch reads PAEAAPATEEAPAAEAEAVEAAPVEEAAPAPVEQAAAPVEDAAPAPQQL.

Component of the photosynthetic reaction center composed of protein subunits L (PufL), M (PufM), H (PuhA) and cytochrome C (PufC). The reaction center interacts with light-harvesting antenna complex LH1. In terms of processing, binds 4 heme groups per subunit.

Its subcellular location is the cellular chromatophore membrane. The reaction center of purple bacteria contains a tightly bound cytochrome molecule which re-reduces the photo oxidized primary electron donor. The protein is Photosynthetic reaction center cytochrome c subunit (pufC) of Allochromatium vinosum (strain ATCC 17899 / DSM 180 / NBRC 103801 / NCIMB 10441 / D) (Chromatium vinosum).